The following is a 562-amino-acid chain: Nucleoprotein (562 aa).

The binding site for the cap structure m7GTP stretch occupies residues 53–238 (MRRERRDDND…ITQEESQINI (186 aa)). Mn(2+) is bound by residues Asp-381 and Glu-383. Zn(2+)-binding residues include Glu-391, Cys-498, His-501, and Cys-522. Mn(2+) is bound at residue Asp-526.

The protein belongs to the arenaviridae nucleocapsid protein family. In terms of assembly, homomultimerizes to form the nucleocapsid. Binds to viral genomic RNA. Interacts with glycoprotein G2. Interacts with protein Z; this interaction probably directs the encapsidated genome to budding sites. Interacts with protein L; this interaction does not interfere with Z-L interaction. Interacts with host IKBKE (via Protein kinase domain); the interaction inhibits IKBKE kinase activity.

It is found in the virion. It localises to the host cytoplasm. In terms of biological role, encapsidates the genome, protecting it from nucleases. The encapsidated genomic RNA is termed the nucleocapsid (NC). Serves as template for viral transcription and replication. The increased presence of protein N in host cell does not seem to trigger the switch from transcription to replication as observed in other negative strain RNA viruses. Through the interaction with host IKBKE, strongly inhibits the phosphorylation and nuclear translocation of host IRF3, a protein involved in interferon activation pathway, leading to the inhibition of interferon-beta and IRF3-dependent promoters activation. Also encodes a functional 3'-5' exoribonuclease that degrades preferentially dsRNA substrates and thereby participates in the suppression of interferon induction. In Tamiami mammarenavirus (isolate Rat/United States/W 10777/1964) (TAMV), this protein is Nucleoprotein.